Here is a 488-residue protein sequence, read N- to C-terminus: Germacrene A acid 8-beta-hydroxylase (488 aa).

A helical; Signal-anchor for type II membrane protein transmembrane segment spans residues 2 to 22; sequence ELFTIFSIVVSSLILFTFWSL. A glycan (N-linked (GlcNAc...) asparagine) is linked at asparagine 407. Cysteine 429 serves as a coordination point for heme.

It belongs to the cytochrome P450 family. Heme is required as a cofactor. In terms of tissue distribution, expressed in leaf primordia.

The protein resides in the membrane. The enzyme catalyses germacra-1(10),4,11(13)-trien-12-oate + reduced [NADPH--hemoprotein reductase] + O2 = 8beta-hydroxygermacra-1(10),4,11(13)-trien-12-oate + oxidized [NADPH--hemoprotein reductase] + H2O + H(+). It participates in secondary metabolite biosynthesis; terpenoid biosynthesis. Its function is as follows. Involved in the biosynthesis of germacrene-derived sesquiterpene lactones. Hydroxylates germacrene A acid to 8-beta-hydroxy-germacrene A acid. Unlike 6-alpha-hydroxy-germacrene A acid, this compound cannot undergo spontaneous lactonization. This Helianthus annuus (Common sunflower) protein is Germacrene A acid 8-beta-hydroxylase.